The sequence spans 481 residues: Beta-amyrin 28-monooxygenase (481 aa).

Residues 4 to 24 form a helical membrane-spanning segment; that stretch reads FYVPLLSLFVLFISLSFHFLF. Residue Cys428 participates in heme binding.

Belongs to the cytochrome P450 family. The cofactor is heme. As to expression, mostly expressed in roots, and, to a lower extent, in stems and leaves. Accumulates only in the rhizome of plants.

It is found in the membrane. The enzyme catalyses beta-amyrin + 3 reduced [NADPH--hemoprotein reductase] + 3 O2 = oleanolate + 3 oxidized [NADPH--hemoprotein reductase] + 4 H2O + 4 H(+). It functions in the pathway secondary metabolite biosynthesis; terpenoid biosynthesis. In terms of biological role, component of the oleanane-type triterpene saponins (e.g. ginsenosides or panaxosides) biosynthetic pathway. Catalyzes the carboxylation of beta-amyrin at the C-28 position to form oleanolic acid during ginsenoside biosynthesis, a class of tetracyclic triterpenoid saponins. The polypeptide is Beta-amyrin 28-monooxygenase (Panax ginseng (Korean ginseng)).